Reading from the N-terminus, the 1204-residue chain is ATP-dependent helicase/nuclease subunit A (1204 aa).

In terms of domain architecture, UvrD-like helicase ATP-binding spans 2–472; that stretch reads PQFTKEQEKA…ILLSDNFRST (471 aa). Position 23-30 (23-30) interacts with ATP; sequence ASAGSGKT. Residues 500–783 form the UvrD-like helicase C-terminal domain; the sequence is GQLIFGAKYY…RLMTIHGSKG (284 aa).

Belongs to the helicase family. AddA subfamily. In terms of assembly, heterodimer of AddA and AddB/RexB. The cofactor is Mg(2+).

The catalysed reaction is Couples ATP hydrolysis with the unwinding of duplex DNA by translocating in the 3'-5' direction.. It catalyses the reaction ATP + H2O = ADP + phosphate + H(+). The heterodimer acts as both an ATP-dependent DNA helicase and an ATP-dependent, dual-direction single-stranded exonuclease. Recognizes the chi site generating a DNA molecule suitable for the initiation of homologous recombination. The AddA nuclease domain is required for chi fragment generation; this subunit has the helicase and 3' -&gt; 5' nuclease activities. The polypeptide is ATP-dependent helicase/nuclease subunit A (Lactobacillus helveticus (strain DPC 4571)).